The following is a 267-amino-acid chain: MFRMLSSSFEDDPFFADSFLAHRESMRNMMRSFSEPLGRDLLSISDGRGRTHNRRERDDGEDSLTHADVNPFQTMDRMMANMRSGIQELQRNFGQLSMDPNGHSFCSSSVMTYSKVGDEPPKVFQASTQTRRAPGGVKETRKAMRDSDSGLERMAVGHHIHDRGHVIRKSKNNKTGDEEVNQEFINMNESDAHAFDDEWQNEVLKYKSIGRSGNTGMRSVGHEHPGSRELKRREKIHRNSAIESGRRSNVFVDKLNVKGSPVKITKK.

Ser6, Ser8, Ser32, and Ser34 each carry phosphoserine. Residues 39 to 67 (RDLLSISDGRGRTHNRRERDDGEDSLTHA) form a disordered region. The segment at 50–125 (RTHNRRERDD…VGDEPPKVFQ (76 aa)) is interaction with COPS3.

It belongs to the MLF family. Interacts with CENPU. Also interacts with NRBP1/MADM, YWHAZ/14-3-3-zeta and HNRPUL2/MANP. NRBP1 recruits a serine kinase which phosphorylates both itself and MLF1. Phosphorylated MLF1 then binds to YWHAZ and is retained in the cytoplasm. Retained in the nucleus by binding to HNRPUL2. Binds to COPS3/CSN3 which is required for suppression of COP1 and activation of p53. Phosphorylation is required for binding to YWHAZ. As to expression, highly expressed in skeletal muscle, heart, testis. Also found in lung, but not in spleen, thymus, bone marrow, liver and kidney.

The protein resides in the cytoplasm. It localises to the nucleus. The protein localises to the cell projection. Its subcellular location is the cilium. It is found in the cytoskeleton. The protein resides in the cilium basal body. Functionally, involved in lineage commitment of primary hemopoietic progenitors by restricting erythroid formation and enhancing myeloid formation. Interferes with erythropoietin-induced erythroid terminal differentiation by preventing cells from exiting the cell cycle through suppression of CDKN1B/p27Kip1 levels. Suppresses COP1 activity via CSN3 which activates p53 and induces cell cycle arrest. Binds DNA and affects the expression of a number of genes so may function as a transcription factor in the nucleus. This is Myeloid leukemia factor 1 (Mlf1) from Mus musculus (Mouse).